A 271-amino-acid polypeptide reads, in one-letter code: Imidazole glycerol phosphate synthase subunit HisF (271 aa).

Catalysis depends on residues aspartate 12 and aspartate 131.

This sequence belongs to the HisA/HisF family. Heterodimer of HisH and HisF.

It localises to the cytoplasm. The enzyme catalyses 5-[(5-phospho-1-deoxy-D-ribulos-1-ylimino)methylamino]-1-(5-phospho-beta-D-ribosyl)imidazole-4-carboxamide + L-glutamine = D-erythro-1-(imidazol-4-yl)glycerol 3-phosphate + 5-amino-1-(5-phospho-beta-D-ribosyl)imidazole-4-carboxamide + L-glutamate + H(+). Its pathway is amino-acid biosynthesis; L-histidine biosynthesis; L-histidine from 5-phospho-alpha-D-ribose 1-diphosphate: step 5/9. Functionally, IGPS catalyzes the conversion of PRFAR and glutamine to IGP, AICAR and glutamate. The HisF subunit catalyzes the cyclization activity that produces IGP and AICAR from PRFAR using the ammonia provided by the HisH subunit. This chain is Imidazole glycerol phosphate synthase subunit HisF, found in Methanospirillum hungatei JF-1 (strain ATCC 27890 / DSM 864 / NBRC 100397 / JF-1).